An 862-amino-acid polypeptide reads, in one-letter code: DNA replication licensing factor MCM4 (862 aa).

The span at 1–10 (MSSPASTPSR) shows a compositional bias: low complexity. 2 disordered regions span residues 1–71 (MSSP…FSSP) and 90–121 (TYGT…GSAR). Ser-2 carries the post-translational modification N-acetylserine. Ser-6 bears the Phosphoserine mark. Phosphothreonine is present on residues Thr-7 and Thr-19. 3 positions are modified to phosphoserine: Ser-26, Ser-31, and Ser-32. Positions 61-71 (PPAQNALFSSP) are enriched in polar residues. Thr-101 is modified (phosphothreonine). Position 104 is a phosphoserine (Ser-104). A Phosphothreonine modification is found at Thr-109. Ser-119, Ser-130, Ser-141, and Ser-144 each carry phosphoserine. Residue Lys-219 is modified to N6-acetyllysine. A Glycyl lysine isopeptide (Lys-Gly) (interchain with G-Cter in SUMO2) cross-link involves residue Lys-438. At Lys-449 the chain carries N6-acetyllysine. The 210-residue stretch at 457 to 666 (IYERLASALA…YDRRLAHHLV (210 aa)) folds into the MCM domain. Residues Tyr-470, Arg-496, Lys-515, Ser-516, Asn-617, Arg-642, Arg-731, and Glu-734 each contribute to the ATP site. Positions 641-644 (SRFD) match the Arginine finger motif. Lys-797 is covalently cross-linked (Glycyl lysine isopeptide (Lys-Gly) (interchain with G-Cter in SUMO2)). Position 857 is an N6-acetyllysine (Lys-857).

The protein belongs to the MCM family. In terms of assembly, component of the MCM2-7 complex. The complex forms a toroidal hexameric ring with the proposed subunit order MCM2-MCM6-MCM4-MCM7-MCM3-MCM5. Component of the CMG helicase complex, a hexameric ring of related MCM2-7 subunits stabilized by CDC45 and the tetrameric GINS complex. Interacts with MCMBP. Post-translationally, sumoylated; SUMO2 modified in response to stress caused by inhibition of proteasome activity (in vitro).

The protein localises to the nucleus. Its subcellular location is the chromosome. The catalysed reaction is ATP + H2O = ADP + phosphate + H(+). In terms of biological role, acts as a component of the MCM2-7 complex (MCM complex) which is the replicative helicase essential for 'once per cell cycle' DNA replication initiation and elongation in eukaryotic cells. Core component of CDC45-MCM-GINS (CMG) helicase, the molecular machine that unwinds template DNA during replication, and around which the replisome is built. The active ATPase sites in the MCM2-7 ring are formed through the interaction surfaces of two neighboring subunits such that a critical structure of a conserved arginine finger motif is provided in trans relative to the ATP-binding site of the Walker A box of the adjacent subunit. The six ATPase active sites, however, are likely to contribute differentially to the complex helicase activity. This is DNA replication licensing factor MCM4 (Mcm4) from Mus musculus (Mouse).